We begin with the raw amino-acid sequence, 914 residues long: Sensor protein TorS (914 aa).

Over 1-8 the chain is Cytoplasmic; it reads MNLTLTRR. Residues 9 to 29 traverse the membrane as a helical segment; that stretch reads LWMGFALMALLTLTSTLVGWY. Residues 30-332 lie on the Periplasmic side of the membrane; the sequence is NLRFISQVEK…EKASARGQYS (303 aa). The helical transmembrane segment at 333-353 threads the bilayer; it reads LLLLGMVSLCALILILWRVVY. The 54-residue stretch at 354 to 407 folds into the HAMP domain; the sequence is RSVTRPLAEQTQALQRLLDGDIDSPFPETAGVRELDTIGRLMDAFRSNVHALNR. The Cytoplasmic portion of the chain corresponds to 354–914; the sequence is RSVTRPLAEQ…WLHKKDLNAI (561 aa). In terms of domain architecture, Histidine kinase spans 450–664; it reads AMSHEIRTPL…CFCLRLPLRV (215 aa). His-453 is subject to Phosphohistidine; by autocatalysis. The Response regulatory domain occupies 683–798; sequence RLLLIEDNPL…VLGQLLAHYL (116 aa). Asp-733 is modified (4-aspartylphosphate). In terms of domain architecture, HPt spans 821–914; that stretch reads GTEKIHEWLV…WLHKKDLNAI (94 aa). His-860 carries the phosphohistidine modification.

May form homomultimers. Seems to interact with TorT and TorC apocytochrome. Activation requires a sequential transfer of a phosphate group from a His in the primary transmitter domain, to an Asp in the receiver domain and to a His in the secondary transmitter domain.

The protein localises to the cell inner membrane. The catalysed reaction is ATP + protein L-histidine = ADP + protein N-phospho-L-histidine.. With respect to regulation, inhibited by TorC apocytochrome. Functionally, member of the two-component regulatory system TorS/TorR involved in the anaerobic utilization of trimethylamine-N-oxide (TMAO). Detects the presence of TMAO in the medium and, in response, activates TorR via a four-step phosphorelay. When TMAO is removed, TorS can dephosphorylate TorR, probably by a reverse phosphorelay involving His-860 and Asp-733. This is Sensor protein TorS (torS) from Escherichia coli (strain K12).